The primary structure comprises 369 residues: RING-H2 finger protein ATL47 (369 aa).

Residues 52 to 72 (IILFIIVLLSVIFFICSILHL) form a helical membrane-spanning segment. The RING-type; atypical zinc-finger motif lies at 144-186 (CAVCLCEFSEDDKLRLLPNCSHAFHIDCIDTWLLSNSTCPLCR). The segment at 332–355 (NNHPSETNLVVGGSSSSSSYVCSG) is disordered. A compositionally biased stretch (low complexity) spans 341–355 (VVGGSSSSSSYVCSG).

The protein belongs to the RING-type zinc finger family. ATL subfamily.

Its subcellular location is the membrane. The catalysed reaction is S-ubiquitinyl-[E2 ubiquitin-conjugating enzyme]-L-cysteine + [acceptor protein]-L-lysine = [E2 ubiquitin-conjugating enzyme]-L-cysteine + N(6)-ubiquitinyl-[acceptor protein]-L-lysine.. The protein operates within protein modification; protein ubiquitination. In Arabidopsis thaliana (Mouse-ear cress), this protein is RING-H2 finger protein ATL47 (ATL47).